Reading from the N-terminus, the 401-residue chain is Carboxybiotin decarboxylase (401 aa).

Helical transmembrane passes span 20-40 (VISI…YFGF), 46-66 (PLIM…VLFL), 70-90 (VVGT…VNLM), 107-127 (LIAC…FILI), 131-151 (ASII…IIGI), 173-193 (MVLF…AIIA), 244-264 (LCLL…GIAI), 275-295 (LLET…LGAL), 306-326 (ISLI…GGVL), and 380-400 (VCGL…LFLL).

It localises to the cell membrane. The catalysed reaction is N(6)-carboxybiotinyl-L-lysyl-[protein] + n Na(+)(in) + H(+) = N(6)-biotinyl-L-lysyl-[protein] + n Na(+)(out) + CO2. In terms of biological role, beta subunit of the biotin-dependent malonate decarboxylase multienzyme complex (EC 7.2.4.4). Acts as an integral membrane-bound carboxybiotin protein decarboxylase by releasing the carboxyl group of the carboxylated biotin carrier MADF. The free energy of the decarboxylation reaction is used to pump Na(+) out of the cell. This is Carboxybiotin decarboxylase (madB) from Malonomonas rubra.